A 369-amino-acid polypeptide reads, in one-letter code: tRNA-specific 2-thiouridylase MnmA (369 aa).

ATP-binding positions include 11-18 (GMSGGVDS) and Met37. Residues 97 to 99 (NPD) form an interaction with target base in tRNA region. The active-site Nucleophile is the Cys102. Cys102 and Cys199 are joined by a disulfide. Position 127 (Gly127) interacts with ATP. The interval 149–151 (KDQ) is interaction with tRNA. Residue Cys199 is the Cysteine persulfide intermediate of the active site. The tract at residues 311 to 312 (RY) is interaction with tRNA.

It belongs to the MnmA/TRMU family. In terms of assembly, interacts with TusE.

The protein resides in the cytoplasm. The catalysed reaction is S-sulfanyl-L-cysteinyl-[protein] + uridine(34) in tRNA + AH2 + ATP = 2-thiouridine(34) in tRNA + L-cysteinyl-[protein] + A + AMP + diphosphate + H(+). In terms of biological role, catalyzes the 2-thiolation of uridine at the wobble position (U34) of tRNA(Lys), tRNA(Glu) and tRNA(Gln), leading to the formation of s(2)U34, the first step of tRNA-mnm(5)s(2)U34 synthesis. Sulfur is provided by IscS, via a sulfur-relay system. Binds ATP and its substrate tRNAs. This chain is tRNA-specific 2-thiouridylase MnmA, found in Enterobacter sp. (strain 638).